The following is a 405-amino-acid chain: Serpin I2 (405 aa).

The N-terminal stretch at 1-18 (MNKTILWSFLLFFSGSQT) is a signal peptide. Residue N306 is glycosylated (N-linked (GlcNAc...) asparagine).

The protein belongs to the serpin family. As to expression, expressed in pancreas.

The protein localises to the secreted. The protein is Serpin I2 (Serpini2) of Mus musculus (Mouse).